Consider the following 336-residue polypeptide: Dihydroorotate dehydrogenase (quinone) (336 aa).

FMN is bound by residues 62 to 66 (AGLDK) and T86. Position 66 (K66) interacts with substrate. 111–115 (NRMGF) provides a ligand contact to substrate. FMN is bound by residues N139 and N172. N172 is a binding site for substrate. The active-site Nucleophile is S175. N177 serves as a coordination point for substrate. 2 residues coordinate FMN: K217 and T245. Residue 246 to 247 (NT) participates in substrate binding. FMN contacts are provided by residues G268, G297, and 318 to 319 (YS).

It belongs to the dihydroorotate dehydrogenase family. Type 2 subfamily. Monomer. FMN is required as a cofactor.

It localises to the cell membrane. The catalysed reaction is (S)-dihydroorotate + a quinone = orotate + a quinol. The protein operates within pyrimidine metabolism; UMP biosynthesis via de novo pathway; orotate from (S)-dihydroorotate (quinone route): step 1/1. Catalyzes the conversion of dihydroorotate to orotate with quinone as electron acceptor. The protein is Dihydroorotate dehydrogenase (quinone) of Vibrio atlanticus (strain LGP32) (Vibrio splendidus (strain Mel32)).